We begin with the raw amino-acid sequence, 254 residues long: Low affinity immunoglobulin gamma Fc region receptor III-A (254 aa).

The signal sequence occupies residues 1-20; the sequence is MWQLLLPTALLLLVSAGMRA. Over 21-206 the chain is Extracellular; the sequence is EDLPKAVVFL…SSISSFFPPG (186 aa). Ig-like C2-type domains lie at 24-105 and 107-189; these read PKAV…LEVH and GWLL…VNIT. Disulfide bonds link Cys47–Cys89 and Cys128–Cys172. An N-linked (GlcNAc...) asparagine glycan is attached at Asn187. A helical membrane pass occupies residues 207 to 229; the sequence is YQVSFCLVMVLLFAVDTGLYFSV. Residues 230 to 254 lie on the Cytoplasmic side of the membrane; sequence KKSVPSSTRDWEDHKFKWSKDPQDK.

As to quaternary structure, forms a heterooligomeric complex with ITAM-containing signaling subunits, either a homodimer of CD247, a homodimer of FCER1G or a heterodimer of CD247 and FCER1G, to form a functional receptor complex. Interacts (via transmembrane domain) with signaling subunits; this interaction is a prerequisite for receptor complex expression on the cell surface and intracellular signal transduction. Binds the Fc region of antigen-complexed IgG with a preference for IgG1 and IgG3 isotypes. Interacts with CD2; this interaction is involved in NK cell activation and cytotoxicity. Interacts with S100A4; this interaction inhibits PKC-dependent phosphorylation of FCGR3A. Post-translationally, glycosylated. Glycosylation plays an inhibitory role in the interaction with IgG1 and IgG2. Undergoes rapid ectodomain shedding upon NK cell stimulation. The soluble form is produced by a proteolytic cleavage mediated by ADAM17. Repeated stimulation causes receptor shedding, a mechanism that allows for increased NK cell motility and detachment from opsonized target cells while avoiding activation-induced NK cell apoptosis. Lymphocytes and monocytes.

It is found in the cell membrane. The protein localises to the secreted. In terms of biological role, receptor for the invariable Fc fragment of immunoglobulin gamma (IgG). Optimally activated upon binding of clustered antigen-IgG complexes displayed on cell surfaces, triggers lysis of antibody-coated cells, a process known as antibody-dependent cellular cytotoxicity (ADCC). Does not bind free monomeric IgG, thus avoiding inappropriate effector cell activation in the absence of antigenic trigger. Mediates IgG effector functions on natural killer (NK) cells. Binds antigen-IgG complexes generated upon infection and triggers NK cell-dependent cytokine production and degranulation to limit viral load and propagation. Involved in the generation of memory-like adaptive NK cells capable to produce high amounts of IFNG and to efficiently eliminate virus-infected cells via ADCC. Regulates NK cell survival and proliferation, in particular by preventing NK cell progenitor apoptosis. Fc-binding subunit that associates with CD247 and/or FCER1G adapters to form functional signaling complexes. Following the engagement of antigen-IgG complexes, triggers phosphorylation of immunoreceptor tyrosine-based activation motif (ITAM)-containing adapters with subsequent activation of phosphatidylinositol 3-kinase signaling and sustained elevation of intracellular calcium that ultimately drive NK cell activation. The ITAM-dependent signaling coupled to receptor phosphorylation by PKC mediates robust intracellular calcium flux that leads to production of pro-inflammatory cytokines, whereas in the absence of receptor phosphorylation it mainly activates phosphatidylinositol 3-kinase signaling leading to cell degranulation. Costimulates NK cells and trigger lysis of target cells independently of IgG binding. Mediates the antitumor activities of therapeutic antibodies. Upon ligation on monocytes triggers TNFA-dependent ADCC of IgG-coated tumor cells. Mediates enhanced ADCC in response to afucosylated IgGs. This chain is Low affinity immunoglobulin gamma Fc region receptor III-A, found in Macaca mulatta (Rhesus macaque).